The sequence spans 256 residues: DNA repair protein RecO (256 aa).

It belongs to the RecO family.

Its function is as follows. Involved in DNA repair and RecF pathway recombination. In Nocardia farcinica (strain IFM 10152), this protein is DNA repair protein RecO.